A 676-amino-acid polypeptide reads, in one-letter code: Electrogenic aspartate/glutamate antiporter SLC25A12, mitochondrial (676 aa).

Ala2 is modified (N-acetylalanine). Positions 2 to 293 (AVKVHTTKRG…TLADIERIAP (292 aa)) are regulatory N-terminal domain. At 2–328 (AVKVHTTKRG…WLQIAESAYR (327 aa)) the chain is on the mitochondrial intermembrane side. The Ca(2+) site is built by Asp65, Thr67, Asp69, Leu71, and Glu76. EF-hand domains are found at residues 65–76 (DQTKDGLISYQE), 86–121 (APDSMFIVAFQLFDKSGNGEVTFENVKEIFGQTIIH), 125–155 (PFNWDCEFIRLHFGHNRKKHLNYVEFTQFLQ), and 157–192 (LQLEHARQAFALKDKSKSGMISGLDFSDVMVTIRSH). Residues 294–309 (LAEGALPYNLAELQRQ) form a linker loop domain region. A carrier domain region spans residues 319–611 (WLQIAESAYR…RWFYIDFGGL (293 aa)). 3 Solcar repeats span residues 323 to 415 (AESA…VRDK), 423 to 507 (IPLP…CKLL), and 515 to 603 (VGGI…LQRW). Residues 329–346 (FTLGSVAGAVGATAVYPI) form a helical membrane-spanning segment. Residues 347-389 (DLVKTRMQNQRGTGSVVGELMYKNSFDCFKKVLRYEGFFGLYR) are Mitochondrial matrix-facing. A helical membrane pass occupies residues 390 to 409 (GLIPQLIGVAPEKAIKLTVN). Residues 410–432 (DFVRDKFTRRDGSIPLPAEILAG) are Mitochondrial intermembrane-facing. Residues 433–446 (GCAGGSQVIFTNPL) traverse the membrane as a helical segment. Topologically, residues 447–481 (EIVKIRLQVAGEITTGPRVSALNVLQDLGLFGLYK) are mitochondrial matrix. A helical membrane pass occupies residues 482–501 (GAKACFLRDIPFSAIYFPVY). Over 502–520 (AHCKLLLADENGHVGGINL) the chain is Mitochondrial intermembrane. Residues 521–538 (LTAGAMAGVPAASLVTPA) form a helical membrane-spanning segment. Topologically, residues 539–577 (DVIKTRLQVAARAGQTTYSGVIDCFRKILREEGPSAFWK) are mitochondrial matrix. A helical transmembrane segment spans residues 578–597 (GTAARVFRSSPQFGVTLVTY). Over 598-676 (ELLQRWFYID…AQPKVAAAAQ (79 aa)) the chain is Mitochondrial intermembrane. A C-terminal domain region spans residues 612 to 674 (KPSGSEPTPK…AAAQPKVAAA (63 aa)).

The protein belongs to the mitochondrial carrier (TC 2.A.29) family. Homodimer (via N-terminus).

It is found in the mitochondrion inner membrane. The catalysed reaction is L-aspartate(in) + L-glutamate(out) + H(+)(out) = L-aspartate(out) + L-glutamate(in) + H(+)(in). The enzyme catalyses 3-sulfino-L-alanine(out) + L-glutamate(in) + H(+)(in) = 3-sulfino-L-alanine(in) + L-glutamate(out) + H(+)(out). It carries out the reaction 3-sulfino-L-alanine(out) + L-aspartate(in) = 3-sulfino-L-alanine(in) + L-aspartate(out). With respect to regulation, L-aspartate and 3-sulfino-L-alanine uptake are both inhibited by glisoxepide. In terms of biological role, mitochondrial electrogenic aspartate/glutamate antiporter that favors efflux of aspartate and entry of glutamate and proton within the mitochondria as part of the malate-aspartate shuttle. Also mediates the uptake of L-cysteinesulfinate (3-sulfino-L-alanine) by mitochondria in exchange of L-glutamate and proton. Can also exchange L-cysteinesulfinate with aspartate in their anionic form without any proton translocation. Lacks transport activity towards L-glutamine or gamma-aminobutyric acid (GABA). The sequence is that of Electrogenic aspartate/glutamate antiporter SLC25A12, mitochondrial from Rattus norvegicus (Rat).